The chain runs to 626 residues: Janus kinase and microtubule-interacting protein 1 (626 aa).

The disordered stretch occupies residues 1–22 (MSKKGRSKGEKPEMETDAVQMA). The tract at residues 1–365 (MSKKGRSKGE…KIKNLTRENV (365 aa)) is mediates association with microtubules. Coiled-coil stretches lie at residues 19–255 (VQMA…EAER) and 284–413 (ERDV…DDLS). The segment at 365–626 (VEMKEKLSAQ…ILFEPKLKFM (262 aa)) is mediates interaction with TYK2 and GABBR1. Serine 382 is modified (phosphoserine). The segment covering 452-461 (ETLSETSYNT) has biased composition (polar residues). The disordered stretch occupies residues 452–477 (ETLSETSYNTDRTDRTPATPEEDLDD). At threonine 470 the chain carries Phosphothreonine. Residues 490–604 (QLTREYQALQ…EFRVLELEVR (115 aa)) are a coiled coil.

This sequence belongs to the JAKMIP family. In terms of assembly, homodimer. Forms a complex with GABBR1 and KIF5B/kinesin-1. Interacts with JAK1 and TYK2. In terms of tissue distribution, predominantly expressed in neural tissues and lymphoid cells (at protein level). Isoform 2, isoform 3 and isoform 4 are specifically expressed in brain and retina. Isoform 1 and isoform 5 are also detected in liver, lung and skeletal muscle. Also detected in testis and to a lower extent spleen and intestine.

The protein localises to the cytoplasm. Its subcellular location is the cytoskeleton. The protein resides in the membrane. In terms of biological role, associates with microtubules and may play a role in the microtubule-dependent transport of the GABA-B receptor. May play a role in JAK1 signaling and regulate microtubule cytoskeleton rearrangements. This is Janus kinase and microtubule-interacting protein 1 (JAKMIP1) from Homo sapiens (Human).